Here is a 316-residue protein sequence, read N- to C-terminus: MTVQPTTIGIVGARGHTGAELIKLIAAHPQLQLVFVSSRELAGQRVAEHSDGYEGELRYESLDADAVAAKAADVVILALPNGKAEPFVAAIDANRPQTLLIDLSADYRFDPAWYYGLPELTRHTYAGQRRISNPGCYATAMQLAITPLREQLAGPPQCFGVSGYSGAGTTPSDKNNPALLADNLMPYALTNHMHEREVSAQLGVPVEFMPHVAPHFRGITMTVNLWLQQPLTREQIHARYLERYAHEPLIEIVDEAPWVSRIAGTQGVQIGGFTMAPGNKRVVVVATLDNLLKGAATQAMQNLNLALGWDELTAIG.

Residue C136 is part of the active site.

The protein belongs to the NAGSA dehydrogenase family. Type 1 subfamily.

The protein resides in the cytoplasm. It carries out the reaction N-acetyl-L-glutamate 5-semialdehyde + phosphate + NADP(+) = N-acetyl-L-glutamyl 5-phosphate + NADPH + H(+). It functions in the pathway amino-acid biosynthesis; L-arginine biosynthesis; N(2)-acetyl-L-ornithine from L-glutamate: step 3/4. Catalyzes the NADPH-dependent reduction of N-acetyl-5-glutamyl phosphate to yield N-acetyl-L-glutamate 5-semialdehyde. In Xanthomonas campestris pv. campestris (strain 8004), this protein is N-acetyl-gamma-glutamyl-phosphate reductase.